Consider the following 301-residue polypeptide: tRNA U34 carboxymethyltransferase (301 aa).

Carboxy-S-adenosyl-L-methionine contacts are provided by residues Lys70, Trp84, Lys89, Gly108, Asp130–Ser132, Val157–Glu158, Tyr177, and Arg292.

Belongs to the class I-like SAM-binding methyltransferase superfamily. CmoB family. In terms of assembly, homotetramer.

It carries out the reaction carboxy-S-adenosyl-L-methionine + 5-hydroxyuridine(34) in tRNA = 5-carboxymethoxyuridine(34) in tRNA + S-adenosyl-L-homocysteine + H(+). Catalyzes carboxymethyl transfer from carboxy-S-adenosyl-L-methionine (Cx-SAM) to 5-hydroxyuridine (ho5U) to form 5-carboxymethoxyuridine (cmo5U) at position 34 in tRNAs. This is tRNA U34 carboxymethyltransferase from Sulfurovum sp. (strain NBC37-1).